The primary structure comprises 371 residues: Carbamoyl phosphate synthase small chain (371 aa).

The interval 1–186 (MDYYNNDTPG…IHQGKTGDVV (186 aa)) is CPSase. Residues Ser-52, Gly-233, and Gly-235 each coordinate L-glutamine. In terms of domain architecture, Glutamine amidotransferase type-1 spans 185-371 (VVVVVDCGIK…KFKKMVVGDA (187 aa)). Cys-261 serves as the catalytic Nucleophile. The L-glutamine site is built by Leu-262, Gln-265, Asn-303, Gly-305, and Tyr-306. Active-site residues include His-346 and Glu-348.

Belongs to the CarA family. As to quaternary structure, composed of two chains; the small (or glutamine) chain promotes the hydrolysis of glutamine to ammonia, which is used by the large (or ammonia) chain to synthesize carbamoyl phosphate. Tetramer of heterodimers (alpha,beta)4.

The catalysed reaction is hydrogencarbonate + L-glutamine + 2 ATP + H2O = carbamoyl phosphate + L-glutamate + 2 ADP + phosphate + 2 H(+). The enzyme catalyses L-glutamine + H2O = L-glutamate + NH4(+). Its pathway is amino-acid biosynthesis; L-arginine biosynthesis; carbamoyl phosphate from bicarbonate: step 1/1. It participates in pyrimidine metabolism; UMP biosynthesis via de novo pathway; (S)-dihydroorotate from bicarbonate: step 1/3. Functionally, small subunit of the glutamine-dependent carbamoyl phosphate synthetase (CPSase). CPSase catalyzes the formation of carbamoyl phosphate from the ammonia moiety of glutamine, carbonate, and phosphate donated by ATP, constituting the first step of 2 biosynthetic pathways, one leading to arginine and/or urea and the other to pyrimidine nucleotides. The small subunit (glutamine amidotransferase) binds and cleaves glutamine to supply the large subunit with the substrate ammonia. The protein is Carbamoyl phosphate synthase small chain of Sulfolobus acidocaldarius (strain ATCC 33909 / DSM 639 / JCM 8929 / NBRC 15157 / NCIMB 11770).